The chain runs to 622 residues: Probable potassium transport system protein Kup 1 (622 aa).

12 consecutive transmembrane segments (helical) span residues 7–27, 50–70, 96–116, 132–152, 165–185, 210–230, 244–264, 282–302, 334–354, 360–380, 391–411, and 416–436; these read LLVL…TSPL, LISL…VLFL, TAIL…DAMI, VTPA…LLLF, FFGP…FVHI, VGIV…ALYA, WFTV…AFVL, ALLP…QAVI, IYLP…VFLF, LATA…VLSF, TWWA…FLGA, and IHDG…IMWT.

This sequence belongs to the HAK/KUP transporter (TC 2.A.72) family.

The protein resides in the cell inner membrane. The enzyme catalyses K(+)(in) + H(+)(in) = K(+)(out) + H(+)(out). Transport of potassium into the cell. Likely operates as a K(+):H(+) symporter. In Rhizobium meliloti (strain 1021) (Ensifer meliloti), this protein is Probable potassium transport system protein Kup 1.